The following is a 738-amino-acid chain: LPS-assembly protein LptD (738 aa).

Residues 1–26 form the signal peptide; sequence MEHKRNNILLAGLFFLLLGLVSIARA.

The protein belongs to the LptD family. Component of the lipopolysaccharide transport and assembly complex. Interacts with LptE and LptA.

Its subcellular location is the cell outer membrane. In terms of biological role, together with LptE, is involved in the assembly of lipopolysaccharide (LPS) at the surface of the outer membrane. This Nitrosococcus oceani (strain ATCC 19707 / BCRC 17464 / JCM 30415 / NCIMB 11848 / C-107) protein is LPS-assembly protein LptD.